Consider the following 181-residue polypeptide: ATP-dependent protease subunit HslV (181 aa).

Threonine 7 is a catalytic residue. 3 residues coordinate Na(+): alanine 166, cysteine 169, and threonine 172.

The protein belongs to the peptidase T1B family. HslV subfamily. In terms of assembly, a double ring-shaped homohexamer of HslV is capped on each side by a ring-shaped HslU homohexamer. The assembly of the HslU/HslV complex is dependent on binding of ATP.

The protein localises to the cytoplasm. The catalysed reaction is ATP-dependent cleavage of peptide bonds with broad specificity.. Its activity is regulated as follows. Allosterically activated by HslU binding. Protease subunit of a proteasome-like degradation complex believed to be a general protein degrading machinery. The protein is ATP-dependent protease subunit HslV of Anaeromyxobacter sp. (strain Fw109-5).